A 248-amino-acid chain; its full sequence is MTSHTLTSFGRQISSPVIVALDYDNQDTALAFADKIDPQDCRLKVGKEMFTLHGPQFVKLLHQRGFEVFLDLKFHDIPNTTARAVAAAAEMGVWMVNVHASGGTRMMTAAKEALLPYGHDAPLLIAVTVLTSMEQSDLQGIGIDMTPAQQAERLAKLTQACGLDGVVCSAHEAQQLKKVCGQHFQLVTPGIRPTGSDVGDQRRIMTPEQAVLAGVDYMVIGRPITRAADPAAALRQINQSIAGVINAR.

Substrate contacts are provided by residues Asp-22, Lys-44, 71–80, Thr-131, Arg-192, Gln-201, Gly-221, and Arg-222; that span reads DLKFHDIPNT. The Proton donor role is filled by Lys-73.

Belongs to the OMP decarboxylase family. Type 1 subfamily. Homodimer.

The enzyme catalyses orotidine 5'-phosphate + H(+) = UMP + CO2. It participates in pyrimidine metabolism; UMP biosynthesis via de novo pathway; UMP from orotate: step 2/2. Functionally, catalyzes the decarboxylation of orotidine 5'-monophosphate (OMP) to uridine 5'-monophosphate (UMP). In Photorhabdus laumondii subsp. laumondii (strain DSM 15139 / CIP 105565 / TT01) (Photorhabdus luminescens subsp. laumondii), this protein is Orotidine 5'-phosphate decarboxylase.